The primary structure comprises 449 residues: Probable secreted beta-glucosidase ARB_04747 (449 aa).

A signal peptide spans Met-1–Ala-21. Asn-57 carries an N-linked (GlcNAc...) asparagine glycan. A disordered region spans residues Ser-96–Cys-185. The span at Pro-98–Lys-125 shows a compositional bias: pro residues. A compositionally biased stretch (basic and acidic residues) spans Glu-131 to Gly-150.

The protein belongs to the SUN family.

It localises to the secreted. It is found in the cell wall. Its function is as follows. Cell surface beta-glucosidase involved in cytokinesis, cell wall biogenesis, adhesion to host tissue; thus playing an important role in the host-pathogen interaction. Has hydrolytic activity on linear (1-&gt;3)-beta-D-glucans such as laminaribiose and other laminarioligosaccharides. The sequence is that of Probable secreted beta-glucosidase ARB_04747 from Arthroderma benhamiae (strain ATCC MYA-4681 / CBS 112371) (Trichophyton mentagrophytes).